A 395-amino-acid polypeptide reads, in one-letter code: Vacuolar protease A (395 aa).

An N-terminal signal peptide occupies residues 1–18; that stretch reads MKGSLLLAGATLLGCTSA. Residues 19 to 72 constitute a propeptide, activation peptide; it reads KLHSLKLKKVSLKEQLEHADIDVQIKSLGQKYMGIRPGQHEQQMFKEQTPIEAE. The Peptidase A1 domain maps to 87–392; it reads YFSEISIGTP…DLGKGTVGLA (306 aa). Residue Asp105 is part of the active site. Cys118 and Cys123 are joined by a disulfide. N-linked (GlcNAc...) asparagine glycosylation occurs at Asn140. Residue Asp289 is part of the active site. A disulfide bridge connects residues Cys318 and Cys351. N-linked (GlcNAc...) asparagine glycosylation occurs at Asn335.

This sequence belongs to the peptidase A1 family.

It localises to the vacuole lumen. Its subcellular location is the secreted. The catalysed reaction is Hydrolysis of proteins with broad specificity for peptide bonds. Cleaves -Leu-Leu-|-Val-Tyr- bond in a synthetic substrate. Does not act on esters of Tyr or Arg.. Its function is as follows. Vacuolar aspartic endopeptidase which is probably also secreted and contributes to virulence. This Arthroderma otae (strain ATCC MYA-4605 / CBS 113480) (Microsporum canis) protein is Vacuolar protease A (PEP2).